We begin with the raw amino-acid sequence, 468 residues long: IQ domain-containing protein C (468 aa).

Positions 6-35 (LVLKVTALQACIRGFLVRRQFQSLRGEYEA) constitute an IQ domain. Disordered stretches follow at residues 113–157 (NASS…GPGL), 202–245 (EVNQ…PGEP), and 329–468 (SHKE…GPAG). The segment covering 139–150 (QETRDVSRKNDP) has biased composition (basic and acidic residues). A compositionally biased stretch (basic and acidic residues) spans 415-426 (SSIERSPSESSH).

The sequence is that of IQ domain-containing protein C (IQCC) from Bos taurus (Bovine).